The following is a 141-amino-acid chain: Hemoglobin subunit alpha-A/A' (141 aa).

The Globin domain occupies 1-141; that stretch reads VLSANDKTNV…VGNVLTAKYR (141 aa). An O2-binding site is contributed by histidine 58. Histidine 87 contacts heme b.

It belongs to the globin family. In terms of assembly, heterotetramer of two alpha chains and two beta chains. As to expression, red blood cells.

In terms of biological role, involved in oxygen transport from the lung to the various peripheral tissues. The polypeptide is Hemoglobin subunit alpha-A/A' (HBAA) (Gyps rueppelli (Rueppell's griffon)).